The sequence spans 363 residues: Peroxidase (363 aa).

Residues 1–20 (MKLSLLSTFAAVIIGALALP) form the signal peptide. At glutamine 21 the chain carries Pyrrolidone carboxylic acid. Cystine bridges form between cysteine 31-cysteine 43, cysteine 42-cysteine 312, cysteine 62-cysteine 148, and cysteine 276-cysteine 341. The active-site Proton acceptor is histidine 75. Ca(2+) is bound by residues aspartate 76, glycine 94, aspartate 96, and serine 98. A glycan (N-linked (GlcNAc...) (high mannose) asparagine) is linked at asparagine 162. Position 203 (histidine 203) interacts with heme b. Ca(2+) contacts are provided by serine 204, aspartate 221, threonine 223, valine 226, and aspartate 228. Serine 358 carries an O-linked (Man...) serine glycan.

Belongs to the peroxidase family. Ligninase subfamily. Ca(2+) serves as cofactor. Requires heme b as cofactor.

It is found in the secreted. The catalysed reaction is 2 a phenolic donor + H2O2 = 2 a phenolic radical donor + 2 H2O. This is Peroxidase (CIP1) from Coprinopsis cinerea (strain Okayama-7 / 130 / ATCC MYA-4618 / FGSC 9003) (Inky cap fungus).